A 330-amino-acid chain; its full sequence is Lipoyl synthase (330 aa).

[4Fe-4S] cluster-binding residues include C77, C82, C88, C103, C107, C110, and S317. One can recognise a Radical SAM core domain in the interval 89-306 (FNHGTATFMI…RSEAEKMGFE (218 aa)).

It belongs to the radical SAM superfamily. Lipoyl synthase family. [4Fe-4S] cluster is required as a cofactor.

It localises to the cytoplasm. The enzyme catalyses [[Fe-S] cluster scaffold protein carrying a second [4Fe-4S](2+) cluster] + N(6)-octanoyl-L-lysyl-[protein] + 2 oxidized [2Fe-2S]-[ferredoxin] + 2 S-adenosyl-L-methionine + 4 H(+) = [[Fe-S] cluster scaffold protein] + N(6)-[(R)-dihydrolipoyl]-L-lysyl-[protein] + 4 Fe(3+) + 2 hydrogen sulfide + 2 5'-deoxyadenosine + 2 L-methionine + 2 reduced [2Fe-2S]-[ferredoxin]. Its pathway is protein modification; protein lipoylation via endogenous pathway; protein N(6)-(lipoyl)lysine from octanoyl-[acyl-carrier-protein]: step 2/2. In terms of biological role, catalyzes the radical-mediated insertion of two sulfur atoms into the C-6 and C-8 positions of the octanoyl moiety bound to the lipoyl domains of lipoate-dependent enzymes, thereby converting the octanoylated domains into lipoylated derivatives. This is Lipoyl synthase from Haemophilus ducreyi (strain 35000HP / ATCC 700724).